Reading from the N-terminus, the 296-residue chain is Phosphatidylglycerol--prolipoprotein diacylglyceryl transferase (296 aa).

A run of 4 helical transmembrane segments spans residues 28–48 (WYGLCFSLGILFASLLGIYLA), 72–92 (FALYSLLFIIPGSRIAYILFY), 110–130 (GGLASHGGMLGLILWALIFSW), and 139–159 (LTFLFLCDLCASVFGCAAFMI). Arg160 contributes to the a 1,2-diacyl-sn-glycero-3-phospho-(1'-sn-glycerol) binding site. Transmembrane regions (helical) follow at residues 197-217 (VQLYEGMSYLLLSIILFFLSY), 226-246 (GWVTSLGLVGISLIRFFAEFF), and 263-283 (GQILSFPLFVFGLCLGIACFL).

Belongs to the Lgt family.

Its subcellular location is the cell inner membrane. The enzyme catalyses L-cysteinyl-[prolipoprotein] + a 1,2-diacyl-sn-glycero-3-phospho-(1'-sn-glycerol) = an S-1,2-diacyl-sn-glyceryl-L-cysteinyl-[prolipoprotein] + sn-glycerol 1-phosphate + H(+). Its pathway is protein modification; lipoprotein biosynthesis (diacylglyceryl transfer). In terms of biological role, catalyzes the transfer of the diacylglyceryl group from phosphatidylglycerol to the sulfhydryl group of the N-terminal cysteine of a prolipoprotein, the first step in the formation of mature lipoproteins. The chain is Phosphatidylglycerol--prolipoprotein diacylglyceryl transferase from Chlamydia caviae (strain ATCC VR-813 / DSM 19441 / 03DC25 / GPIC) (Chlamydophila caviae).